The following is a 121-amino-acid chain: Large ribosomal subunit protein bL12 (121 aa).

The protein belongs to the bacterial ribosomal protein bL12 family. As to quaternary structure, homodimer. Part of the ribosomal stalk of the 50S ribosomal subunit. Forms a multimeric L10(L12)X complex, where L10 forms an elongated spine to which 2 to 4 L12 dimers bind in a sequential fashion. Binds GTP-bound translation factors.

Functionally, forms part of the ribosomal stalk which helps the ribosome interact with GTP-bound translation factors. Is thus essential for accurate translation. The sequence is that of Large ribosomal subunit protein bL12 from Streptococcus agalactiae serotype V (strain ATCC BAA-611 / 2603 V/R).